The primary structure comprises 151 residues: Small ribosomal subunit protein uS9 (151 aa).

The segment covering 1–19 (MTETTPAPQTPAAPAGPAQ) has biased composition (low complexity). Disordered stretches follow at residues 1–20 (MTET…PAQS) and 121–151 (KAGF…YSKR). Positions 127–136 (RDPRATERKK) are enriched in basic and acidic residues. Over residues 137 to 151 (YGLKKARKAPQYSKR) the composition is skewed to basic residues.

This sequence belongs to the universal ribosomal protein uS9 family.

The polypeptide is Small ribosomal subunit protein uS9 (rpsI) (Mycobacterium bovis (strain ATCC BAA-935 / AF2122/97)).